The following is a 329-amino-acid chain: GTP 3',8-cyclase (329 aa).

In terms of domain architecture, Radical SAM core spans 8 to 234 (AFARKFYYLR…QLRQRSDGPA (227 aa)). R17 is a GTP binding site. The [4Fe-4S] cluster site is built by C24 and C28. S-adenosyl-L-methionine is bound at residue Y30. A [4Fe-4S] cluster-binding site is contributed by C31. R68 serves as a coordination point for GTP. G72 contributes to the S-adenosyl-L-methionine binding site. A GTP-binding site is contributed by T99. S123 is an S-adenosyl-L-methionine binding site. K160 lines the GTP pocket. M194 is a binding site for S-adenosyl-L-methionine. The [4Fe-4S] cluster site is built by C257 and C260. 262–264 (RLR) contacts GTP. Residue C274 participates in [4Fe-4S] cluster binding.

The protein belongs to the radical SAM superfamily. MoaA family. In terms of assembly, monomer and homodimer. The cofactor is [4Fe-4S] cluster.

It carries out the reaction GTP + AH2 + S-adenosyl-L-methionine = (8S)-3',8-cyclo-7,8-dihydroguanosine 5'-triphosphate + 5'-deoxyadenosine + L-methionine + A + H(+). Its pathway is cofactor biosynthesis; molybdopterin biosynthesis. Functionally, catalyzes the cyclization of GTP to (8S)-3',8-cyclo-7,8-dihydroguanosine 5'-triphosphate. This is GTP 3',8-cyclase from Escherichia coli O139:H28 (strain E24377A / ETEC).